A 598-amino-acid polypeptide reads, in one-letter code: Probable translation initiation factor IF-2 (598 aa).

Residues 3 to 225 (LRCPIVSVLG…GLAQKFLEQK (223 aa)) form the tr-type G domain. The segment at 12–19 (GHVDHGKT) is G1. 12–19 (GHVDHGKT) provides a ligand contact to GTP. A G2 region spans residues 37–41 (GITQH). The G3 stretch occupies residues 76–79 (DTPG). Residues 76–80 (DTPGH) and 130–133 (NKLD) each bind GTP. Residues 130 to 133 (NKLD) form a G4 region. The G5 stretch occupies residues 200 to 202 (SAI).

It belongs to the TRAFAC class translation factor GTPase superfamily. Classic translation factor GTPase family. IF-2 subfamily.

Function in general translation initiation by promoting the binding of the formylmethionine-tRNA to ribosomes. Seems to function along with eIF-2. In Methanococcus vannielii (strain ATCC 35089 / DSM 1224 / JCM 13029 / OCM 148 / SB), this protein is Probable translation initiation factor IF-2.